Consider the following 943-residue polypeptide: MENIDIRGARTHNLKNINLTIPRNKLVVITGLSGSGKSSLAFDTLYAEGQRRYVESLSAYARQFLSLMEKPDVDSIEGLSPAISIEQKSTSHNPRSTVGTITEIYDYLRLLFARVGEPRCPDHNVPLTAQTISQMVDKVLSLPEDSKMMLLAPVVKNRKGEHVKILENIAAQGYIRARIDGEICDLSDPPKLALQKKHTIEVVVDRFKVRSDLATRLAESFETALELSGGTAIVAEMDNPKAEELVFSANFACPHCGYSVPELEPRLFSFNNPAGACPTCDGLGVQQYFDEDRVVQNPTISLAGGAVKGWDRRNFYYYQMLTSLAKHYHFDVEAPYESLPKKIQHIIMHGSGKEEIEFQYMNDRGDVVIRKHPFEGILNNMARRYKETESMSVREELAKNISNRPCIDCGGSRLRPEARNVYIGRTNLPIIAEKSIGETLEFFTALSLTGQKAQIAEKILKEIRERLQFLVNVGLNYLSLSRSAETLSGGEAQRIRLASQIGAGLVGVMYVLDEPSIGLHQRDNERLLNTLIHLRNLGNTVIVVEHDEDAIRAADHIIDIGPGAGVHGGQVIAQGNADEIMLNPNSITGKFLSGADKIEIPKKRTALDKKKWLKLKGASGNNLKNVNLDIPVGLFTCVTGVSGSGKSTLINDTLFPLAQNALNRAEKTDYAPYQSIEGLEHFDKVIDINQSPIGRTPRSNPATYTGLFTPIRELFAGVPEARARGYNPGRFSFNVRGGRCEACQGDGVLKVEMHFLPDVYVPCDQCKGKRYNRETLEIRYKGKTIHQVLDMTVEEAREFFDAIPMIARKLQTLMDVGLSYIRLGQSSTTLSGGEAQRVKLATELSKRDTGKTLYILDEPTTGLHFADIKQLLEVLHRLRDQGNTIVVIEHNLDVIKTADWIVDLGPEGGSGGGQIIATGTPEQVAKVTSSHTARFLKPILEKP.

31–38 (GLSGSGKS) is an ATP binding site. The segment at 253-280 (CPHCGYSVPELEPRLFSFNNPAGACPTC) adopts a C4-type zinc-finger fold. ABC transporter domains lie at 310–587 (WDRR…PNSI) and 607–937 (LDKK…RFLK). Residue 640–647 (GVSGSGKS) participates in ATP binding. A C4-type zinc finger spans residues 740–766 (CEACQGDGVLKVEMHFLPDVYVPCDQC).

The protein belongs to the ABC transporter superfamily. UvrA family. Forms a heterotetramer with UvrB during the search for lesions.

The protein localises to the cytoplasm. Its function is as follows. The UvrABC repair system catalyzes the recognition and processing of DNA lesions. UvrA is an ATPase and a DNA-binding protein. A damage recognition complex composed of 2 UvrA and 2 UvrB subunits scans DNA for abnormalities. When the presence of a lesion has been verified by UvrB, the UvrA molecules dissociate. The polypeptide is UvrABC system protein A (Haemophilus influenzae (strain ATCC 51907 / DSM 11121 / KW20 / Rd)).